The following is an 808-amino-acid chain: Probable ATP-dependent helicase MJ1401 (808 aa).

A Q motif motif is present at residues 189–217 (YKIDELDIPEELKEIIKSRGIEELLPVQT). Residues 221 to 391 (KAGLLNGDDL…QLNAKLVLYN (171 aa)) form the Helicase ATP-binding domain. 234–241 (SATSSGKT) contacts ATP. A DEIH box motif is present at residues 336–339 (DEIH). The 190-residue stretch at 396–585 (PLERHIIFCK…EDEEEEQILA (190 aa)) folds into the Helicase C-terminal domain.

It belongs to the DEAD box helicase family.

This chain is Probable ATP-dependent helicase MJ1401, found in Methanocaldococcus jannaschii (strain ATCC 43067 / DSM 2661 / JAL-1 / JCM 10045 / NBRC 100440) (Methanococcus jannaschii).